A 41-amino-acid polypeptide reads, in one-letter code: ORF3c protein (41 aa).

Functionally, may play a role in host modulation. The protein is ORF3c protein of Severe acute respiratory syndrome coronavirus 2 (2019-nCoV).